A 292-amino-acid chain; its full sequence is Xyloglucan endotransglucosylase/hydrolase protein 2 (292 aa).

An N-terminal signal peptide occupies residues 1–24; sequence MNRIRYCFELVSVLFLMFTANARA. Positions 25–219 constitute a GH16 domain; that stretch reads RGRGAIDFDV…WAYAPFKAQY (195 aa). Glu-106 (nucleophile) is an active-site residue. The Proton donor role is filled by Glu-110. Xyloglucan is bound by residues Glu-110, 123-125, 133-135, 198-199, and Gly-203; these read QTN, GRE, and NW. Intrachain disulfides connect Cys-227-Cys-239 and Cys-275-Cys-288. Residue Arg-280 coordinates xyloglucan.

It belongs to the glycosyl hydrolase 16 family. XTH group 1 subfamily. Post-translationally, contains at least one intrachain disulfide bond essential for its enzymatic activity.

It localises to the secreted. It is found in the cell wall. The protein localises to the extracellular space. Its subcellular location is the apoplast. The catalysed reaction is breaks a beta-(1-&gt;4) bond in the backbone of a xyloglucan and transfers the xyloglucanyl segment on to O-4 of the non-reducing terminal glucose residue of an acceptor, which can be a xyloglucan or an oligosaccharide of xyloglucan.. May catalyze xyloglucan endohydrolysis (XEH) and/or endotransglycosylation (XET). Cleaves and religates xyloglucan polymers, an essential constituent of the primary cell wall, and thereby participates in cell wall construction of growing tissues. The polypeptide is Xyloglucan endotransglucosylase/hydrolase protein 2 (XTH2) (Arabidopsis thaliana (Mouse-ear cress)).